A 100-amino-acid chain; its full sequence is NAD(P)H-quinone oxidoreductase subunit 4L, chloroplastic (100 aa).

Helical transmembrane passes span 1 to 21 (MLEHALILGAYLFSIGIYGLV), 31 to 51 (MCLELILNAVNLNLVTFSNFF), and 63 to 83 (IFVIAIAAAEAAIGLAIVLAI).

This sequence belongs to the complex I subunit 4L family. NDH is composed of at least 16 different subunits, 5 of which are encoded in the nucleus.

Its subcellular location is the plastid. It localises to the chloroplast thylakoid membrane. The catalysed reaction is a plastoquinone + NADH + (n+1) H(+)(in) = a plastoquinol + NAD(+) + n H(+)(out). It carries out the reaction a plastoquinone + NADPH + (n+1) H(+)(in) = a plastoquinol + NADP(+) + n H(+)(out). Functionally, NDH shuttles electrons from NAD(P)H:plastoquinone, via FMN and iron-sulfur (Fe-S) centers, to quinones in the photosynthetic chain and possibly in a chloroplast respiratory chain. The immediate electron acceptor for the enzyme in this species is believed to be plastoquinone. Couples the redox reaction to proton translocation, and thus conserves the redox energy in a proton gradient. This is NAD(P)H-quinone oxidoreductase subunit 4L, chloroplastic from Cryptomeria japonica (Japanese cedar).